Reading from the N-terminus, the 326-residue chain is NADH-specific methylglyoxal reductase (326 aa).

NAD(+)-binding positions include 20–21 (TW) and Asp-54. Tyr-59 serves as the catalytic Proton donor. Residues Gln-189, 217–222 (YSPLEQ), Gly-291, and Gln-297 each bind NAD(+).

Belongs to the aldo/keto reductase family. Aldo/keto reductase 11 subfamily. As to quaternary structure, monomer.

It carries out the reaction hydroxyacetone + NAD(+) = methylglyoxal + NADH + H(+). Functionally, catalyzes the NADH-dependent reduction of methylglyoxal (2-oxopropanal) in vitro. It is not known if this activity has physiological significance. Cannot use NADPH as a cosubstrate. Seems to play some role in intestinal colonization. The polypeptide is NADH-specific methylglyoxal reductase (ydjG) (Escherichia coli (strain K12)).